Reading from the N-terminus, the 308-residue chain is 4-hydroxy-3-methylbut-2-enyl diphosphate reductase (308 aa).

Cys-12 lines the [4Fe-4S] cluster pocket. Residues His-41 and His-74 each contribute to the (2E)-4-hydroxy-3-methylbut-2-enyl diphosphate site. The dimethylallyl diphosphate site is built by His-41 and His-74. Isopentenyl diphosphate-binding residues include His-41 and His-74. Cys-96 lines the [4Fe-4S] cluster pocket. His-124 serves as a coordination point for (2E)-4-hydroxy-3-methylbut-2-enyl diphosphate. His-124 provides a ligand contact to dimethylallyl diphosphate. His-124 provides a ligand contact to isopentenyl diphosphate. Residue Glu-126 is the Proton donor of the active site. Thr-166 is a (2E)-4-hydroxy-3-methylbut-2-enyl diphosphate binding site. Cys-196 is a [4Fe-4S] cluster binding site. 4 residues coordinate (2E)-4-hydroxy-3-methylbut-2-enyl diphosphate: Ser-224, Ser-225, Asn-226, and Ser-268. Dimethylallyl diphosphate is bound by residues Ser-224, Ser-225, Asn-226, and Ser-268. Residues Ser-224, Ser-225, Asn-226, and Ser-268 each contribute to the isopentenyl diphosphate site.

Belongs to the IspH family. It depends on [4Fe-4S] cluster as a cofactor.

It catalyses the reaction isopentenyl diphosphate + 2 oxidized [2Fe-2S]-[ferredoxin] + H2O = (2E)-4-hydroxy-3-methylbut-2-enyl diphosphate + 2 reduced [2Fe-2S]-[ferredoxin] + 2 H(+). The enzyme catalyses dimethylallyl diphosphate + 2 oxidized [2Fe-2S]-[ferredoxin] + H2O = (2E)-4-hydroxy-3-methylbut-2-enyl diphosphate + 2 reduced [2Fe-2S]-[ferredoxin] + 2 H(+). It functions in the pathway isoprenoid biosynthesis; dimethylallyl diphosphate biosynthesis; dimethylallyl diphosphate from (2E)-4-hydroxy-3-methylbutenyl diphosphate: step 1/1. The protein operates within isoprenoid biosynthesis; isopentenyl diphosphate biosynthesis via DXP pathway; isopentenyl diphosphate from 1-deoxy-D-xylulose 5-phosphate: step 6/6. Functionally, catalyzes the conversion of 1-hydroxy-2-methyl-2-(E)-butenyl 4-diphosphate (HMBPP) into a mixture of isopentenyl diphosphate (IPP) and dimethylallyl diphosphate (DMAPP). Acts in the terminal step of the DOXP/MEP pathway for isoprenoid precursor biosynthesis. The polypeptide is 4-hydroxy-3-methylbut-2-enyl diphosphate reductase (Vesicomyosocius okutanii subsp. Calyptogena okutanii (strain HA)).